The chain runs to 551 residues: L-lactate permease (551 aa).

13 consecutive transmembrane segments (helical) span residues 13–33, 37–57, 69–89, 131–151, 159–179, 194–214, 220–240, 244–264, 366–386, 405–425, 438–458, 494–514, and 530–550; these read NIWL…FALI, LKGY…ALLF, VVYG…AAVF, GAAG…GLGF, LCLI…PILV, MVGR…MAIM, IKET…AQYL, FIGP…CLTL, FDWF…SIVW, LALP…SNYS, TGHA…FLTG, VTGK…VGLV, and IFTC…TWMI.

This sequence belongs to the lactate permease family.

The protein resides in the cell inner membrane. It carries out the reaction (S)-lactate(in) + H(+)(in) = (S)-lactate(out) + H(+)(out). The enzyme catalyses (R)-lactate(in) + H(+)(in) = (R)-lactate(out) + H(+)(out). It catalyses the reaction glycolate(in) + H(+)(in) = glycolate(out) + H(+)(out). Inhibited by the proton ionophore carbonyl cyanide m-chlorophenylhydrazone (CCCP). Functionally, uptake of L-lactate across the membrane. Can also transport D-lactate and glycolate. Seems to be driven by a proton motive force. The polypeptide is L-lactate permease (Escherichia coli (strain K12)).